We begin with the raw amino-acid sequence, 20 residues long: RGSNLTTHPLRNIKDLVVYM.

N-linked (GlcNAc...) asparagine glycosylation is present at Asn-4.

The protein belongs to the peptidase A1 family. In terms of tissue distribution, chorionic epithelium (trophectoderm) and placental cotyledons.

Its subcellular location is the secreted. The protein localises to the extracellular space. This chain is Pregnancy-associated glycoprotein 60H, found in Bison bonasus (European bison).